The primary structure comprises 72 residues: Translation initiation factor IF-1 (72 aa).

Residues 1–72 (MSKEGKITLK…TRGRIIYRIS (72 aa)) form the S1-like domain.

It belongs to the IF-1 family. Component of the 30S ribosomal translation pre-initiation complex which assembles on the 30S ribosome in the order IF-2 and IF-3, IF-1 and N-formylmethionyl-tRNA(fMet); mRNA recruitment can occur at any time during PIC assembly.

The protein localises to the cytoplasm. Its function is as follows. One of the essential components for the initiation of protein synthesis. Stabilizes the binding of IF-2 and IF-3 on the 30S subunit to which N-formylmethionyl-tRNA(fMet) subsequently binds. Helps modulate mRNA selection, yielding the 30S pre-initiation complex (PIC). Upon addition of the 50S ribosomal subunit IF-1, IF-2 and IF-3 are released leaving the mature 70S translation initiation complex. This chain is Translation initiation factor IF-1, found in Malacoplasma penetrans (strain HF-2) (Mycoplasma penetrans).